Here is a 354-residue protein sequence, read N- to C-terminus: Uroporphyrinogen decarboxylase (354 aa).

Residues 27–31 (RQAGR), D77, Y154, T209, and H327 contribute to the substrate site.

This sequence belongs to the uroporphyrinogen decarboxylase family. In terms of assembly, homodimer.

It is found in the cytoplasm. It carries out the reaction uroporphyrinogen III + 4 H(+) = coproporphyrinogen III + 4 CO2. Its pathway is porphyrin-containing compound metabolism; protoporphyrin-IX biosynthesis; coproporphyrinogen-III from 5-aminolevulinate: step 4/4. Its function is as follows. Catalyzes the decarboxylation of four acetate groups of uroporphyrinogen-III to yield coproporphyrinogen-III. The protein is Uroporphyrinogen decarboxylase of Klebsiella pneumoniae (strain 342).